Here is a 240-residue protein sequence, read N- to C-terminus: Uridylate kinase (240 aa).

13 to 16 lines the ATP pocket; the sequence is KFSG. G55 lines the UMP pocket. ATP is bound by residues G56 and R60. UMP is bound by residues D76 and 137–144; that span reads TGNPFFTT. Residues T164, Y170, and D173 each contribute to the ATP site.

Belongs to the UMP kinase family. Homohexamer.

It is found in the cytoplasm. The enzyme catalyses UMP + ATP = UDP + ADP. It participates in pyrimidine metabolism; CTP biosynthesis via de novo pathway; UDP from UMP (UMPK route): step 1/1. With respect to regulation, inhibited by UTP. Catalyzes the reversible phosphorylation of UMP to UDP. The polypeptide is Uridylate kinase (Helicobacter pylori (strain ATCC 700392 / 26695) (Campylobacter pylori)).